We begin with the raw amino-acid sequence, 31 residues long: Cytochrome b6-f complex subunit 6 (31 aa).

A helical transmembrane segment spans residues 3–23; that stretch reads TITSYFGFLLAVLTITSGLFI.

The protein belongs to the PetL family. As to quaternary structure, the 4 large subunits of the cytochrome b6-f complex are cytochrome b6, subunit IV (17 kDa polypeptide, PetD), cytochrome f and the Rieske protein, while the 4 small subunits are PetG, PetL, PetM and PetN. The complex functions as a dimer.

It is found in the plastid. The protein resides in the chloroplast thylakoid membrane. In terms of biological role, component of the cytochrome b6-f complex, which mediates electron transfer between photosystem II (PSII) and photosystem I (PSI), cyclic electron flow around PSI, and state transitions. PetL is important for photoautotrophic growth as well as for electron transfer efficiency and stability of the cytochrome b6-f complex. The protein is Cytochrome b6-f complex subunit 6 of Lotus japonicus (Lotus corniculatus var. japonicus).